Consider the following 91-residue polypeptide: Lactococcin-B immunity protein (91 aa).

In terms of biological role, imparts immunity to lactococcin-B to naturally sensitive host strains. This chain is Lactococcin-B immunity protein (lciB), found in Lactococcus lactis subsp. cremoris (Streptococcus cremoris).